Reading from the N-terminus, the 496-residue chain is O-acetyltransferase cpsE (496 aa).

Over residues 203–217 (IGTQGQLPDGVQSSD) the composition is skewed to polar residues. Residues 203–228 (IGTQGQLPDGVQSSDDPTDGAGDIFE) are disordered.

Belongs to the fumigaclavine B O-acetyltransferase family.

The enzyme catalyses campesine A + acetyl-CoA = campesine C + CoA. Its pathway is alkaloid biosynthesis. O-acetyltransferase; part of the gene cluster that mediates the biosynthesis of campesine G, a dimeric indole piperazine alkaloid that shows good insecticidal activity Galleria mellonella. Within the pathway, cpsE acetylates N13 of campesine A to produce campesine C. CpsE produces an inseparable mixture of two acyl-atropisomers due to the spontaneous rotation of an acyl group at N13 of piperazine ring. The non-canonical non-ribosomal peptide synthetase cpsA catalyzes the first steps of the pathway by producing L-tryptophanal and L-valinal from their respective amino-acids. These products condensate spontaneously to form trypyl-valyl pyrazine also known as didehydrocampesine A. The NmrA-like family domain-containing oxidoreductase cpsB is the next enzyme in cps pathway and reduces the unstable didehydrocampesine A to campesine A. The methyltransferase cpsF and the acetyltransferase cpsE both recognize N13 of piperazine ring to carry out methylation and acetylation of campesine A to produce campesine C and B, respectively. The cytochrome P450 monooxygenase cpsD then acts as a dimerase that catalyzes oxidative heterocoupling between campesine B and C to produce heterodimers with unexpected 6/5/6/6/6/6/5/6 eight-ring scaffold called campesine D. Finally,the cytochrome P450 monooxygenase cpsC is a regioselective dehydrogenase that catalyzes dehydrogenation reaction towards C2-N1 to produce campesine G. In Aspergillus campestris (strain IBT 28561), this protein is O-acetyltransferase cpsE.